We begin with the raw amino-acid sequence, 142 residues long: Glutamate-rich protein 2 (142 aa).

2 disordered regions span residues 1–55 (MSKN…HAPL) and 104–142 (EKAQNLEEDDDESEEDNSESEGESTEDPSEESSDECEDG). Residues 9 to 27 (EQEKNNEHCPEDINDKLSE) show a composition bias toward basic and acidic residues. Positions 28 to 43 (STDDDGEDTSDEDKEE) are enriched in acidic residues. The segment covering 44–53 (DSNPNKDTHA) has biased composition (basic and acidic residues). Residues 109–142 (LEEDDDESEEDNSESEGESTEDPSEESSDECEDG) are compositionally biased toward acidic residues.

The chain is Glutamate-rich protein 2 (ERICH2) from Bos taurus (Bovine).